The sequence spans 566 residues: Poly(A) polymerase pla1 (566 aa).

Residues 86–88 (YGS), 99–101 (DID), Asp153, Lys214, Tyr223, and 232–233 (GV) contribute to the ATP site. Mg(2+) contacts are provided by Asp99, Asp101, and Asp153. Disordered stretches follow at residues 437–463 (HEKLANDTVNEEKADNTESKADGSENG) and 530–566 (DEVFEPGEERPKATKKRSTADTAHSTEQLKRQKVSTA).

The protein belongs to the poly(A) polymerase family. Mg(2+) is required as a cofactor. The cofactor is Mn(2+).

Its subcellular location is the nucleus. The enzyme catalyses RNA(n) + ATP = RNA(n)-3'-adenine ribonucleotide + diphosphate. Its function is as follows. Polymerase that creates the 3'-poly(A) tail of mRNA's. May acquire specificity through interaction with a cleavage and polyadenylation factor (CF I). The sequence is that of Poly(A) polymerase pla1 (pla1) from Schizosaccharomyces pombe (strain 972 / ATCC 24843) (Fission yeast).